Here is a 393-residue protein sequence, read N- to C-terminus: Serine/threonine-protein phosphatase 2A activator 1 (393 aa).

The tract at residues 328-393 is disordered; that stretch reads EKEEESIEQA…TSFSRDRLRR (66 aa). Polar residues-rich tracts occupy residues 335–356 and 365–386; these read EQAN…TSTS and SGNN…QTSF. S341 carries the phosphoserine modification.

This sequence belongs to the PTPA-type PPIase family. Interacts with the phosphatase PP2A-like catalytic subunits PPG1, PPH3 and SIT4. Forms a ternary complex with SIT4-TAP42.

The protein resides in the cytoplasm. The protein localises to the nucleus. It carries out the reaction [protein]-peptidylproline (omega=180) = [protein]-peptidylproline (omega=0). PPIases accelerate the folding of proteins. It catalyzes the cis-trans isomerization of proline imidic peptide bonds in oligopeptides. Acts as a regulatory subunit for TAP42-associated PP2A-like phosphatases modulating their activity or substrate specificity, probably by inducing a conformational change in the catalytic subunit, a direct target of the PPIase. Can reactivate inactive phosphatase PP2A-phosphatase methylesterase complexes (PP2Ai) in presence of ATP and Mg(2+) by dissociating the inactive form from the complex. Involved in the regulation of cell cycle progression, mitotic spindle formation, bud morphogenesis and DNA repair. The sequence is that of Serine/threonine-protein phosphatase 2A activator 1 (RRD1) from Saccharomyces cerevisiae (strain ATCC 204508 / S288c) (Baker's yeast).